The chain runs to 529 residues: MSPHVDMSSGSPDGAAPAVQKAFNGFLTENIDESQFPALENRSHLRYTPQDELHDMICVGFGPASLAIGVALHDALDGTDGSLADVQGLQSRPPKVAFLEKQPQFAWHAGMLLPGAKMQITFMKDMATMRNPRSEFTFLNYLHQKDRLVEFANLNTFLPARVEYEDYMKWCASWFEEVVAYSQEVVKVMPEKSASGEITSFNVMSHNHLTGRTESRRAKHVVIAAGGRPNIPAPFPTNHPRVIHSSQFSYMSKQLLKDHDAPYNIAVVGNGQSAAEIFDFLHANYPNSRTRLLIKGGALRPSDDSPFVNEIFNPSRTDCTYNRAPKLRATTLVEDKGTNYGVVRLGLLEHIYETLYMQRIRYGNSPAEEAHWPHRILPYRRVMDVTESPVCQGGVRLHVQDSSALYFSEQAGGQERKETLDVDAVFVATGYLRDLHETLLKDARHLMPGGELEGAKWQVQRDYRVNFTEKSVGEDAGVWLQGCCESTHGLSDTLLSVLATRGGEMVRSLFEKPAKWDNGHVLGGYEVRE.

FAD is bound by residues 100–108 (EKQPQFAWH) and glutamine 119. A substrate-binding site is contributed by lysine 124. Valine 185 is a binding site for FAD. 270-273 (NGQS) contributes to the NADP(+) binding site. Substrate is bound by residues 309 to 312 (NEIF) and asparagine 339. Position 339–341 (339–341 (NYG)) interacts with NADP(+). An FAD-binding site is contributed by 493 to 495 (TLL). Serine 496 provides a ligand contact to substrate.

Belongs to the lysine N(6)-hydroxylase/L-ornithine N(5)-oxygenase family. Homotetramer. Requires FAD as cofactor.

The enzyme catalyses L-ornithine + NADPH + O2 = N(5)-hydroxy-L-ornithine + NADP(+) + H2O. The catalysed reaction is L-ornithine + NADH + O2 = N(5)-hydroxy-L-ornithine + NAD(+) + H2O. It functions in the pathway siderophore biosynthesis. Its function is as follows. L-ornithine N(5)-monooxygenase; part of the gene cluster that mediates the biosynthesis of hydroxamate-containing siderophores that play a critical role in virulence. Cochliobolus heterostrophus produces extracellular coprogen-type siderophores including coprogen, neocoprogen I and neocoprogen II, as well as the intracellular siderophore ferricrocin. The role of extracellular siderophores is to supply iron to their producers in planta and the intracellular ferricrocin is required for intracellular iron distribution and storage with a crucial role in ascus and ascospore development. SIDA2 catalyzes the conversion of L-ornithine to N(5)-hydroxyornithine, the first step in the biosynthesis of all hydroxamate-containing siderophores. The assembly of extracellular coprogen-type siderophores is then performed by the nonribosomal peptide synthetase (NRPS) NPS6 whereas the intracellular siderophore ferricrocin is assembled by NPS2. In Cochliobolus heterostrophus (strain C4 / ATCC 48331 / race T) (Southern corn leaf blight fungus), this protein is L-ornithine N(5)-monooxygenase.